The primary structure comprises 253 residues: POU Class 2 homeobox-associating factor 3 (253 aa).

Residues 5 to 27 (PKVYQGVRVKMTVKELLQQRRAH) enclose the OCA domain.

Belongs to the POU2AF family. Interacts with POU2F3 in a DNA-dependent manner; this interaction increases POU2F3 transactivation activity. Expressed in tuft cells.

The protein resides in the cytoplasm. Its subcellular location is the nucleus. In terms of biological role, transcriptional coactivator that specifically associates with POU2F3. This complex drives the development of tuft cells, a rare a rare chemosensory cells that coordinate immune and neural functions within mucosal epithelial tissues. The sequence is that of POU Class 2 homeobox-associating factor 3 from Mus musculus (Mouse).